The sequence spans 308 residues: Probable 5-dehydro-4-deoxyglucarate dehydratase (308 aa).

It belongs to the DapA family.

It catalyses the reaction 5-dehydro-4-deoxy-D-glucarate + H(+) = 2,5-dioxopentanoate + CO2 + H2O. It functions in the pathway carbohydrate acid metabolism; D-glucarate degradation; 2,5-dioxopentanoate from D-glucarate: step 2/2. In Bacillus subtilis (strain 168), this protein is Probable 5-dehydro-4-deoxyglucarate dehydratase (ycbC).